The sequence spans 109 residues: U4-lycotoxin-Ls1d (109 aa).

The N-terminal stretch at 1–22 (MKVLVLFSVLFLTLFSYSSTEA) is a signal peptide. A propeptide spanning residues 23-44 (MDEFDSDAEEDMLSLMANEQVR) is cleaved from the precursor. Residues 45–88 (AKACTPRLHDCSHDRHSCCRGELFKDVCYCFYPEGEDKTEVCSC) are knottin domain. Intrachain disulfides connect Cys48–Cys63, Cys55–Cys72, Cys62–Cys88, and Cys74–Cys86. The tract at residues 89-108 (QQPKSHKYIEKVVDKARTVV) is linear cationic cytotoxin domain.

It belongs to the neurotoxin 19 (CSTX) family. 05 (U4-Lctx) subfamily. As to expression, expressed by the venom gland.

The protein localises to the secreted. Enhances the high-affinity desensitization of human P2RX3 purinoceptors. This Lycosa singoriensis (Wolf spider) protein is U4-lycotoxin-Ls1d.